We begin with the raw amino-acid sequence, 321 residues long: ATP-dependent 6-phosphofructokinase (321 aa).

Gly-12 lines the ATP pocket. ADP contacts are provided by residues 22–26 (RGVVR) and 55–60 (RYSVSD). Residues 73–74 (RF) and 103–106 (GDGS) each bind ATP. Asp-104 is a binding site for Mg(2+). Position 127-129 (127-129 (TID)) interacts with substrate. The active-site Proton acceptor is Asp-129. Residue Arg-156 coordinates ADP. Substrate contacts are provided by residues Arg-164 and 171–173 (MGR). ADP contacts are provided by residues 187-189 (GCE), Lys-213, and 215-217 (KRH). Substrate-binding positions include Glu-224, Arg-245, and 251 to 254 (HIQR).

Belongs to the phosphofructokinase type A (PFKA) family. ATP-dependent PFK group I subfamily. Prokaryotic clade 'B1' sub-subfamily. Homotetramer. The cofactor is Mg(2+).

Its subcellular location is the cytoplasm. The catalysed reaction is beta-D-fructose 6-phosphate + ATP = beta-D-fructose 1,6-bisphosphate + ADP + H(+). It functions in the pathway carbohydrate degradation; glycolysis; D-glyceraldehyde 3-phosphate and glycerone phosphate from D-glucose: step 3/4. Its activity is regulated as follows. Allosterically activated by ADP and other diphosphonucleosides, and allosterically inhibited by phosphoenolpyruvate. Catalyzes the phosphorylation of D-fructose 6-phosphate to fructose 1,6-bisphosphate by ATP, the first committing step of glycolysis. In Histophilus somni (strain 129Pt) (Haemophilus somnus), this protein is ATP-dependent 6-phosphofructokinase.